The sequence spans 26 residues: Hemocyanin subunit 3 (26 aa).

The protein belongs to the tyrosinase family. Hemocyanin subfamily. In terms of tissue distribution, hemolymph.

Its subcellular location is the secreted. The protein localises to the extracellular space. Functionally, hemocyanins are copper-containing oxygen carriers occurring freely dissolved in the hemolymph of many mollusks and arthropods. The protein is Hemocyanin subunit 3 of Homarus americanus (American lobster).